We begin with the raw amino-acid sequence, 218 residues long: Sodium channel regulatory subunit beta-1 (218 aa).

The first 18 residues, 1–18 (MGTLLALVVGAALVSSAW), serve as a signal peptide directing secretion. Over 19-157 (GGCVEVDSET…DKANRDMASI (139 aa)) the chain is Extracellular. 2 cysteine pairs are disulfide-bonded: cysteine 21-cysteine 43 and cysteine 40-cysteine 121. Residues 22–150 (VEVDSETEAV…KIHIEVVDKA (129 aa)) form the Ig-like C2-type domain. 4 N-linked (GlcNAc...) asparagine glycosylation sites follow: asparagine 93, asparagine 110, asparagine 114, and asparagine 135. A helical membrane pass occupies residues 158 to 179 (VSEIMMYVLIVVLTIWLVAEMV). The Cytoplasmic portion of the chain corresponds to 180–218 (YCYKKIAAATEAAAQENASEYLAITSESKENCTGVQVAE).

This sequence belongs to the sodium channel auxiliary subunit SCN1B (TC 8.A.17) family. A voltage-gated sodium (Nav) channel consists of an ion-conducting pore-forming alpha subunit functional on its own that is regulated by one or more beta subunits. Interacts with SCN1A; regulatory subunit of SCN1A/Nav1.1. Interacts with SCN3A; regulatory subunit of SCN3A/Nav1.3. Interacts with SCN4A; regulatory subunit of SCN4A/Nav1.4. Interacts with SCN5A; regulatory subunit of SCN5A/Nav1.5. Interacts with SCN8A; regulatory subunit of SCN8A/Nav1.6. Interacts with SCN9A; regulatory subunit of SCN9A/Nav1.7. Interacts with SCN10A; regulatory subunit of SCN10A/Nav1.8. Interacts with NFASC. Interacts with TMEM65.

It localises to the cell membrane. The protein localises to the perikaryon. The protein resides in the cell projection. Its subcellular location is the axon. Regulatory subunit of multiple voltage-gated sodium (Nav) channels directly mediating the depolarization of excitable membranes. Navs, also called VGSCs (voltage-gated sodium channels) or VDSCs (voltage-dependent sodium channels), operate by switching between closed and open conformations depending on the voltage difference across the membrane. In the open conformation they allow Na(+) ions to selectively pass through the pore, along their electrochemical gradient. The influx of Na+ ions provokes membrane depolarization, initiating the propagation of electrical signals throughout cells and tissues. The accessory beta subunits participate in localization and functional modulation of the Nav channels. Modulates the activity of SCN1A/Nav1.1, SCN2A/Nav1.2, SCN3A/Nav1.3, SCN4A/Nav1.4, SCN5A/Nav1.5, SCN8A/Nav1.6, SCN9A/Nav1.7 and SCN10A/Nav1.8. The chain is Sodium channel regulatory subunit beta-1 from Canis lupus familiaris (Dog).